The primary structure comprises 266 residues: Oxidoreductase aflX (266 aa).

It belongs to the avfA family.

The protein operates within mycotoxin biosynthesis; aflatoxin biosynthesis. Its function is as follows. Oxidoreductase; part of the gene cluster that mediates the biosynthesis of aflatoxins, a group of polyketide-derived furanocoumarins, and part of the most toxic and carcinogenic compounds among the known mycotoxins. The four major aflatoxins produced by A.parasiticus are aflatoxin B1 (AFB1), aflatoxin B2 (AFB2), aflatoxin G1 (AFG1) and aflatoxin G2 (AFG2). Within the aflatoxin pathway, the oxidoreductase aflX seems to be involved in the conversion of versicolorin A (VERA) to demethylsterigmatocystin (DMST), through probable epoxide ring-opening step following versicolorin A oxidation required for the formation of the xanthone ring. The biosynthesis of aflatoxins begins with the norsolorinic acid synthase aflC that combines a hexanoyl starter unit produced by the fatty acid synthase aflA/aflB and 7 malonyl-CoA extender units to synthesize the precursor NOR. The second step is the conversion of NOR to averantin and requires the norsolorinic acid ketoreductase aflD, which catalyzes the dehydration of norsolorinic acid to form (1'S)-averantin. The norsolorinic acid reductases aflE and aflF may also play a role in the conversion of NOR to AVN. The cytochrome P450 monooxygenase aflG then catalyzes the hydroxylation of AVN to 5'hydroxyaverantin (HAVN). The next step is performed by the 5'-hydroxyaverantin dehydrogenase aflH that transforms HAVN to 5'-oxoaverantin (OAVN) which is further converted to averufin (AVF) by aflK that plays a dual role in the pathway, as a 5'-oxoaverantin cyclase that mediates conversion of 5'-oxoaverantin, as well as a versicolorin B synthase in a later step in the pathway. The averufin oxidase aflI catalyzes the conversion of AVF to versiconal hemiacetal acetate (VHA). VHA is then the substrate for the versiconal hemiacetal acetate esterase aflJ to yield versiconal (VAL). Versicolorin B synthase aflK then converts VAL to versicolorin B (VERB) by closing the bisfuran ring of aflatoxin which is required for DNA-binding, thus giving to aflatoxin its activity as a mutagen. Then, the activity of the versicolorin B desaturase aflL leads to versicolorin A (VERA). A branch point starts from VERB since it can also be converted to dihydrodemethylsterigmatocystin (DMDHST), probably also by aflL, VERA being a precursor for aflatoxins B1 and G1, and DMDHST for aflatoxins B2 and G2. Next, the versicolorin reductase aflM and the cytochrome P450 monooxygenase aflN are involved in conversion of VERA to demethylsterigmatocystin (DMST). AflX and aflY seem also involved in this step, through probable aflX-mediated epoxide ring-opening step following versicolorin A oxidation and aflY-mediated Baeyer-Villiger oxidation required for the formation of the xanthone ring. The methyltransferase aflO then leads to the modification of DMST to sterigmatocystin (ST), and of DMDHST to dihydrosterigmatocystin (DHST). Both ST and DHST are then substrates of the O-methyltransferase aflP to yield O-methylsterigmatocystin (OMST) and dihydro-O-methylsterigmatocystin (DHOMST), respectively. Finally OMST is converted to aflatoxins B1 and G1, and DHOMST to aflatoxins B2 and G2, via the action of several enzymes including O-methylsterigmatocystin oxidoreductase aflQ, the cytochrome P450 monooxygenase aflU, but also the NADH-dependent flavin oxidoreductase nadA which is specifically required for the synthesis of AFG1. This Aspergillus parasiticus (strain ATCC 56775 / NRRL 5862 / SRRC 143 / SU-1) protein is Oxidoreductase aflX.